The chain runs to 65 residues: Small ribosomal subunit protein eS17 (65 aa).

It belongs to the eukaryotic ribosomal protein eS17 family.

The sequence is that of Small ribosomal subunit protein eS17 from Methanocella arvoryzae (strain DSM 22066 / NBRC 105507 / MRE50).